A 263-amino-acid chain; its full sequence is Endonuclease 8 (263 aa).

Proline 2 functions as the Schiff-base intermediate with DNA in the catalytic mechanism. The active-site Proton donor is the glutamate 3. The Proton donor; for beta-elimination activity role is filled by lysine 53. The DNA site is built by glutamine 70, arginine 125, and asparagine 169. The FPG-type zinc-finger motif lies at lysine 229–histidine 263. Arginine 253 serves as the catalytic Proton donor; for delta-elimination activity.

Belongs to the FPG family. The cofactor is Zn(2+).

It catalyses the reaction 2'-deoxyribonucleotide-(2'-deoxyribose 5'-phosphate)-2'-deoxyribonucleotide-DNA = a 3'-end 2'-deoxyribonucleotide-(2,3-dehydro-2,3-deoxyribose 5'-phosphate)-DNA + a 5'-end 5'-phospho-2'-deoxyribonucleoside-DNA + H(+). In terms of biological role, involved in base excision repair of DNA damaged by oxidation or by mutagenic agents. Acts as a DNA glycosylase that recognizes and removes damaged bases. Has a preference for oxidized pyrimidines, such as thymine glycol, 5,6-dihydrouracil and 5,6-dihydrothymine. Has AP (apurinic/apyrimidinic) lyase activity and introduces nicks in the DNA strand. Cleaves the DNA backbone by beta-delta elimination to generate a single-strand break at the site of the removed base with both 3'- and 5'-phosphates. The chain is Endonuclease 8 from Escherichia coli (strain K12 / MC4100 / BW2952).